Reading from the N-terminus, the 207-residue chain is Interleukin-6 (207 aa).

Positions M1–A18 are cleaved as a signal peptide. The tract at residues R26–R47 is disordered. Positions N31–G44 are enriched in polar residues. Residues C65 and C71 are joined by a disulfide bond. The residue at position 74 (S74) is a Phosphoserine. C94 and C104 are joined by a disulfide.

The protein belongs to the IL-6 superfamily. As to quaternary structure, component of a hexamer of two molecules each of IL6, IL6R and IL6ST; first binds to IL6R to associate with the signaling subunit IL6ST. Interacts with IL6R (via the N-terminal ectodomain); this interaction may be affected by IL6R-binding with SORL1, hence decreasing IL6 cis signaling. Interacts with SORL1 (via the N-terminal ectodomain); this interaction leads to IL6 internalization and lysosomal degradation. May form a trimeric complex with the soluble SORL1 ectodomain and soluble IL6R receptor; this interaction might stabilize circulating IL6, hence promoting IL6 trans signaling.

Its subcellular location is the secreted. In terms of biological role, cytokine with a wide variety of biological functions in immunity, tissue regeneration, and metabolism. Binds to IL6R, then the complex associates to the signaling subunit IL6ST/gp130 to trigger the intracellular IL6-signaling pathway. The interaction with the membrane-bound IL6R and IL6ST stimulates 'classic signaling', whereas the binding of IL6 and soluble IL6R to IL6ST stimulates 'trans-signaling'. Alternatively, 'cluster signaling' occurs when membrane-bound IL6:IL6R complexes on transmitter cells activate IL6ST receptors on neighboring receiver cells. Functionally, IL6 is a potent inducer of the acute phase response. Rapid production of IL6 contributes to host defense during infection and tissue injury, but excessive IL6 synthesis is involved in disease pathology. In the innate immune response, is synthesized by myeloid cells, such as macrophages and dendritic cells, upon recognition of pathogens through toll-like receptors (TLRs) at the site of infection or tissue injury. In the adaptive immune response, is required for the differentiation of B cells into immunoglobulin-secreting cells. Plays a major role in the differentiation of CD4(+) T cell subsets. Essential factor for the development of T follicular helper (Tfh) cells that are required for the induction of germinal-center formation. Required to drive naive CD4(+) T cells to the Th17 lineage. Also required for proliferation of myeloma cells and the survival of plasmablast cells. Its function is as follows. Acts as an essential factor in bone homeostasis and on vessels directly or indirectly by induction of VEGF, resulting in increased angiogenesis activity and vascular permeability. Induces, through 'trans-signaling' and synergistically with IL1B and TNF, the production of VEGF. Involved in metabolic controls, is discharged into the bloodstream after muscle contraction increasing lipolysis and improving insulin resistance. 'Trans-signaling' in central nervous system also regulates energy and glucose homeostasis. Mediates, through GLP-1, crosstalk between insulin-sensitive tissues, intestinal L cells and pancreatic islets to adapt to changes in insulin demand. Also acts as a myokine. Plays a protective role during liver injury, being required for maintenance of tissue regeneration. Also has a pivotal role in iron metabolism by regulating HAMP/hepcidin expression upon inflammation or bacterial infection. Through activation of IL6ST-YAP-NOTCH pathway, induces inflammation-induced epithelial regeneration. The polypeptide is Interleukin-6 (IL6) (Marmota monax (Woodchuck)).